The primary structure comprises 550 residues: Glucagon-like peptide 2 receptor (550 aa).

Topologically, residues 1–173 are extracellular; that stretch reads MRPQPSPAVP…SFRQNVDHYA (173 aa). 3 cysteine pairs are disulfide-bonded: C83–C105, C96–C137, and C118–C159. 4 N-linked (GlcNAc...) asparagine glycosylation sites follow: N97, N113, N148, and N162. Residues 174-198 form a helical membrane-spanning segment; sequence LLYTLQLMYTVGYSVSLISLFLALT. At 199–210 the chain is on the cytoplasmic side; sequence LFLFLRKLHCTR. The chain crosses the membrane as a helical span at residues 211-235; the sequence is NYIHMNLFASFILKVLAVLVKDMVS. The Extracellular segment spans residues 236 to 261; that stretch reads HNSYSKRPDDESGWMSYLSETSVSCR. The helical transmembrane segment at 262–285 threads the bilayer; that stretch reads SVQVLLHYFVGTNHLWLLVEGLYL. Topologically, residues 286–299 are cytoplasmic; it reads HTLLEPTVFPERRL. The chain crosses the membrane as a helical span at residues 300–321; the sequence is WPKYLVVGWAFPMLFVIPWGFA. The Extracellular segment spans residues 322 to 339; the sequence is RAHLENTRCWATNGNLKI. A helical transmembrane segment spans residues 340–362; sequence WWIIRGPMLLCVTVNFFIFLKIL. At 363–386 the chain is on the cytoplasmic side; that stretch reads KLLISKLKAHQMCFRDYKYRLAKS. The chain crosses the membrane as a helical span at residues 387–405; the sequence is TLLLIPLLGVHEVLFTFFP. At 406–417 the chain is on the extracellular side; that stretch reads DDQVQGFSKRIR. The chain crosses the membrane as a helical span at residues 418-438; sequence LFIQLTLSSVHGFLVALQYGF. At 439 to 550 the chain is on the cytoplasmic side; sequence ANGEVKAELR…MEEILEESEI (112 aa).

This sequence belongs to the G-protein coupled receptor 2 family.

It is found in the cell membrane. In terms of biological role, this is a receptor for glucagon-like peptide 2. The activity of this receptor is mediated by G proteins which activate adenylyl cyclase. This is Glucagon-like peptide 2 receptor (Glp2r) from Rattus norvegicus (Rat).